The sequence spans 59 residues: Large ribosomal subunit protein uL30 (59 aa).

The protein belongs to the universal ribosomal protein uL30 family. In terms of assembly, part of the 50S ribosomal subunit.

The protein is Large ribosomal subunit protein uL30 of Buchnera aphidicola subsp. Acyrthosiphon pisum (strain 5A).